The sequence spans 254 residues: uncharacterized protein (254 aa).

This is an uncharacterized protein from Haemophilus influenzae (strain ATCC 51907 / DSM 11121 / KW20 / Rd).